Here is a 499-residue protein sequence, read N- to C-terminus: Cysteine--tRNA ligase (499 aa).

Cys31 serves as a coordination point for Zn(2+). The 'HIGH' region signature appears at 33-43 (VTVYDLCHLGH). Positions 215, 240, and 244 each coordinate Zn(2+). The short motif at 272 to 276 (KMSKS) is the 'KMSKS' region element. Lys275 provides a ligand contact to ATP.

This sequence belongs to the class-I aminoacyl-tRNA synthetase family. As to quaternary structure, monomer. The cofactor is Zn(2+).

It is found in the cytoplasm. It carries out the reaction tRNA(Cys) + L-cysteine + ATP = L-cysteinyl-tRNA(Cys) + AMP + diphosphate. The polypeptide is Cysteine--tRNA ligase (Synechococcus sp. (strain WH7803)).